Consider the following 692-residue polypeptide: A-kinase anchor protein 8 (692 aa).

Residues 1–195 (MDQGYGGYGA…FMRGRGQGRF (195 aa)) are interaction with MCM2. The interaction with DPY30 stretch occupies residues 1-210 (MDQGYGGYGA…PGTFMRSDPF (210 aa)). Residue R109 is modified to Asymmetric dimethylarginine; alternate. Omega-N-methylarginine; alternate is present on R109. An interaction with DDX5 region spans residues 109-201 (RGGSGGGGEG…QGRFQDRSNP (93 aa)). S112 is modified (phosphoserine). 3 disordered regions span residues 168-203 (GQYS…NPGT), 231-254 (GGRG…SMAP), and 269-382 (STMP…RTRD). Over residues 172–182 (ECRDPARERGS) the composition is skewed to basic and acidic residues. At S199 the chain carries Phosphoserine. An omega-N-methylarginine mark is found at R233 and R277. Basic and acidic residues-rich tracts occupy residues 281–297 (RMRD…DRFG) and 314–323 (PDTKLARVDS). The Bipartite nuclear localization signal signature appears at 289–306 (KRRGFDRFGPDGTGRKRK). A Glycyl lysine isopeptide (Lys-Gly) (interchain with G-Cter in SUMO2) cross-link involves residue K317. Phosphoserine is present on residues S323, S328, and S339. Residues 324 to 334 (EGDFSENDDAA) are compositionally biased toward acidic residues. The interval 387 to 450 (RIQFACSVCK…NKKIEKRRQE (64 aa)) is involved in chromatin-binding. C2H2 AKAP95-type zinc fingers lie at residues 392–414 (CSVC…SKFH) and 481–504 (CLAC…SVDH). An involved in condensin complex recruitment region spans residues 525–569 (SVLNNRHIVKMLEKYLKGEDPFTSETVDPEMEGDDNLGGEDKKET). The disordered stretch occupies residues 545 to 571 (PFTSETVDPEMEGDDNLGGEDKKETPE). Residues 551–562 (VDPEMEGDDNLG) are compositionally biased toward acidic residues. A Glycyl lysine isopeptide (Lys-Gly) (interchain with G-Cter in SUMO2) cross-link involves residue K567. The tract at residues 572-589 (EVAADVLAEVITAAVRAV) is RII-binding. Residues 576 to 593 (DVLAEVITAAVRAVDGEG) are required for interaction with MYCBP. The interval 592 to 692 (EGAPAPESSG…AESKDAVPTE (101 aa)) is disordered. Residues 634–646 (AHEKGVPKARSEA) are compositionally biased toward basic and acidic residues. S662 is subject to Phosphoserine. Positions 663-675 (AQTRVAPAPAAAD) are enriched in low complexity. The span at 683 to 692 (AESKDAVPTE) shows a compositional bias: basic and acidic residues. S685 carries the post-translational modification Phosphoserine.

The protein belongs to the AKAP95 family. In terms of assembly, binds to the PKA RII-alpha regulatory subunit PRKAR2A (phosphorylated at 'Thr-54') during mitosis. Interacts (via C-terminus) with FIGN. Interacts with NCAPD2, CCND1, MCM2, RPS6KA1, PDE4A. Interacts with CCND3, CCNE1, DDX5, CASP3. Interacts with NFKB1; detetcted in the cytoplasm. Interacts with MYCBP; MYCBP is translocated to the nucleus and the interaction prevents the association of the PKA catalytic subunit leading to suppression of PKA activity. Interacts with DPY30; mediating AKAP8 association with at least the MLL4/WBP7 HMT complex. Interacts with HDAC3; increased during mitosis. Interacts with GJA1; in the nucleus and in the nuclear membrane; the nuclear association increases with progress of cell cycle G1, S and G2 phase and decreases in M phase. Post-translationally, phosphorylated on tyrosine residues probably by SRC subfamily protein kinases; multiple phosphorylation is leading to dissociation from nuclear structures implicated in chromatin structural changes. Highly expressed in heart, liver, skeletal muscle, kidney and pancreas. Expressed in mature dendritic cells.

The protein resides in the nucleus. It localises to the nucleus matrix. It is found in the nucleolus. The protein localises to the cytoplasm. Functionally, anchoring protein that mediates the subcellular compartmentation of cAMP-dependent protein kinase (PKA type II). Acts as an anchor for a PKA-signaling complex onto mitotic chromosomes, which is required for maintenance of chromosomes in a condensed form throughout mitosis. Recruits condensin complex subunit NCAPD2 to chromosomes required for chromatin condensation; the function appears to be independent from PKA-anchoring. May help to deliver cyclin D/E to CDK4 to facilitate cell cycle progression. Required for cell cycle G2/M transition and histone deacetylation during mitosis. In mitotic cells recruits HDAC3 to the vicinity of chromatin leading to deacetylation and subsequent phosphorylation at 'Ser-10' of histone H3; in this function may act redundantly with AKAP8L. Involved in nuclear retention of RPS6KA1 upon ERK activation thus inducing cell proliferation. May be involved in regulation of DNA replication by acting as scaffold for MCM2. Enhances HMT activity of the KMT2 family MLL4/WBP7 complex and is involved in transcriptional regulation. In a teratocarcinoma cell line is involved in retinoic acid-mediated induction of developmental genes implicating H3 'Lys-4' methylation. May be involved in recruitment of active CASP3 to the nucleus in apoptotic cells. May act as a carrier protein of GJA1 for its transport to the nucleus. May play a repressive role in the regulation of rDNA transcription. Preferentially binds GC-rich DNA in vitro. In cells, associates with ribosomal RNA (rRNA) chromatin, preferentially with rRNA promoter and transcribed regions. Involved in modulation of Toll-like receptor signaling. Required for the cAMP-dependent suppression of TNF-alpha in early stages of LPS-induced macrophage activation; the function probably implicates targeting of PKA to NFKB1. The chain is A-kinase anchor protein 8 (AKAP8) from Homo sapiens (Human).